The primary structure comprises 287 residues: Glucose uptake protein GlcU (287 aa).

Helical transmembrane passes span 4–26 (LLAL…LGGG), 38–60 (ALIV…IFIV), 110–132 (WSTP…GIIL), 153–175 (ILIL…LFNV), 180–197 (ALLP…VLTY), 210–227 (ILPG…FISQ), 232–254 (VATS…IFIL), and 261–283 (RQLI…LGIA).

It belongs to the GRP transporter (TC 2.A.7.5) family.

The protein localises to the cell membrane. Involved in the uptake of glucose. This Bacillus subtilis (strain 168) protein is Glucose uptake protein GlcU (glcU).